Here is a 188-residue protein sequence, read N- to C-terminus: Elongation factor P (188 aa).

This sequence belongs to the elongation factor P family.

The protein localises to the cytoplasm. It functions in the pathway protein biosynthesis; polypeptide chain elongation. Functionally, involved in peptide bond synthesis. Stimulates efficient translation and peptide-bond synthesis on native or reconstituted 70S ribosomes in vitro. Probably functions indirectly by altering the affinity of the ribosome for aminoacyl-tRNA, thus increasing their reactivity as acceptors for peptidyl transferase. This chain is Elongation factor P, found in Bdellovibrio bacteriovorus (strain ATCC 15356 / DSM 50701 / NCIMB 9529 / HD100).